Reading from the N-terminus, the 57-residue chain is UPF0391 membrane protein RPC_3278 (57 aa).

2 consecutive transmembrane segments (helical) span residues 4–24 and 30–50; these read WVIT…GGIA and IAKI…VVGL.

This sequence belongs to the UPF0391 family.

It localises to the cell membrane. The polypeptide is UPF0391 membrane protein RPC_3278 (Rhodopseudomonas palustris (strain BisB18)).